Here is a 92-residue protein sequence, read N- to C-terminus: Serine rich endogenous peptide 11 (92 aa).

The first 29 residues, 1–29, serve as a signal peptide directing secretion; that stretch reads MENNTFSSKSINLLILLLLLCTFLCQTES. A disordered region spans residues 50–92; it reads PNTDIGTPSSTSDRGGGGNGRRLMSQMDVGASSSGQGGGRNRH. Over residues 53 to 62 the composition is skewed to polar residues; it reads DIGTPSSTSD. 2 short sequence motifs (SCOOP motif) span residues 53–67 and 75–89; these read DIGTPSSTSDRGGGG and QMDVGASSSGQGGGR. Short sequence motifs (sxS motif essential for MIK2 binding) lie at residues 59–61 and 81–83; these read STS and SSS.

The protein belongs to the serine rich endogenous peptide (SCOOP) phytocytokine family. In terms of assembly, interacts with MIK2 (via extracellular leucine-rich repeat domain); this interaction triggers the formation of complex between MIK2 and the BAK1/SERK3 and SERK4 coreceptors, and subsequent BAK1 activation by phosphorylation. Mostly expressed in seedlings shoots and roots, and, to a lower extent, in leaves.

Its subcellular location is the cell membrane. It localises to the secreted. It is found in the extracellular space. The protein resides in the apoplast. Brassicaceae-specific phytocytokine (plant endogenous peptide released into the apoplast) perceived by MIK2 in a BAK1/SERK3 and SERK4 coreceptors-dependent manner, that modulates various physiological and antimicrobial processes including growth prevention and reactive oxygen species (ROS) response regulation. The sequence is that of Serine rich endogenous peptide 11 from Arabidopsis thaliana (Mouse-ear cress).